Here is a 1109-residue protein sequence, read N- to C-terminus: Pesticidal crystal protein Cry28Aa (1109 aa).

This sequence belongs to the delta endotoxin family.

Functionally, promotes colloidosmotic lysis by binding to the midgut epithelial cells of insects. The polypeptide is Pesticidal crystal protein Cry28Aa (cry28Aa) (Bacillus thuringiensis subsp. finitimus).